Here is a 199-residue protein sequence, read N- to C-terminus: RNA pyrophosphohydrolase (199 aa).

In terms of domain architecture, Nudix hydrolase spans 6-154; it reads GYRPNVGIVL…KREVYELALS (149 aa). The Nudix box motif lies at 38 to 59; it reads GGIQHGESPEQAMYRELHEEVG.

This sequence belongs to the Nudix hydrolase family. RppH subfamily. A divalent metal cation is required as a cofactor.

Its function is as follows. Accelerates the degradation of transcripts by removing pyrophosphate from the 5'-end of triphosphorylated RNA, leading to a more labile monophosphorylated state that can stimulate subsequent ribonuclease cleavage. This Polynucleobacter asymbioticus (strain DSM 18221 / CIP 109841 / QLW-P1DMWA-1) (Polynucleobacter necessarius subsp. asymbioticus) protein is RNA pyrophosphohydrolase.